Consider the following 756-residue polypeptide: Neutral ceramidase (756 aa).

Topologically, residues 1 to 11 (MAKRTFSTLEA) are cytoplasmic. A helical; Signal-anchor for type II membrane protein transmembrane segment spans residues 12-32 (FLIFLLVIMTVITVALLTLLF). The Lumenal portion of the chain corresponds to 33–756 (VTSGTIENHK…ISSPFEVVTT (724 aa)). O-linked (GalNAc...) threonine glycosylation is found at Thr-56, Thr-57, Thr-58, and Thr-64. Leu-110 is a Ca(2+) binding site. His-170 serves as a coordination point for Zn(2+). Residue Asn-193 is glycosylated (N-linked (GlcNAc...) asparagine). His-279 is a binding site for Zn(2+). Residue Ser-330 is the Nucleophile of the active site. 2 disulfides stabilise this stretch: Cys-338–Cys-352 and Cys-345–Cys-360. N-linked (GlcNAc...) asparagine glycans are attached at residues Asn-407 and Asn-444. Cys-424 and Cys-474 form a disulfide bridge. The Zn(2+) site is built by Glu-516 and Tyr-555. Residues Asp-688, Ser-690, and Thr-693 each contribute to the Ca(2+) site. The tract at residues 746-756 (GISSPFEVVTT) is required for correct folding and localization.

This sequence belongs to the neutral ceramidase family. In terms of assembly, may interact with CAV1. The cofactor is Zn(2+). Post-translationally, proteolytic cleavage of the N-terminus removes the signal-anchor and produces a soluble form of the protein. N-glycosylated. Required for enzyme activity. In terms of processing, O-glycosylated. Required to retain it as a type II membrane protein at the cell surface. Post-translationally, phosphorylated. May prevent ubiquitination and subsequent degradation. Ubiquitinated, leading to its degradation by the proteasome. Ubiquitination is triggered by nitric oxide. Widely expressed. Strongly expressed in small intestine and to a lower extent in liver and kidney. Highly expressed in duodenum, jejunum and ileum along the brush border of the small intestine (at protein level).

Its subcellular location is the cell membrane. The protein localises to the membrane raft. It is found in the membrane. It localises to the caveola. The protein resides in the golgi apparatus membrane. Its subcellular location is the mitochondrion. The protein localises to the secreted. It is found in the extracellular exosome. It catalyses the reaction an N-acylsphing-4-enine + H2O = sphing-4-enine + a fatty acid. It carries out the reaction N-hexadecanoylsphing-4-enine + H2O = sphing-4-enine + hexadecanoate. The enzyme catalyses N-dodecanoylsphing-4-enine + H2O = dodecanoate + sphing-4-enine. The catalysed reaction is N-octadecanoylsphing-4-enine + H2O = sphing-4-enine + octadecanoate. It catalyses the reaction N-octanoylsphing-4-enine + H2O = octanoate + sphing-4-enine. It carries out the reaction N-(hexanoyl)sphing-4-enine + H2O = hexanoate + sphing-4-enine. The enzyme catalyses N-tetradecanoylsphing-4-enine + H2O = tetradecanoate + sphing-4-enine. The catalysed reaction is N-(9Z-octadecenoyl)-sphing-4-enine + H2O = sphing-4-enine + (9Z)-octadecenoate. It catalyses the reaction N-(15Z-tetracosenoyl)-sphing-4-enine + H2O = (15Z)-tetracosenoate + sphing-4-enine. It carries out the reaction sphinganine + hexadecanoate = N-hexadecanoylsphinganine + H2O. The enzyme catalyses N-(octadecanoyl)-sphinganine + H2O = sphinganine + octadecanoate. It participates in lipid metabolism; sphingolipid metabolism. With respect to regulation, inhibited by D-erythro-MAPP. Plasma membrane ceramidase that hydrolyzes sphingolipid ceramides into sphingosine and free fatty acids at neutral pH. Ceramides, sphingosine, and its phosphorylated form sphingosine-1-phosphate are bioactive lipids that mediate cellular signaling pathways regulating several biological processes including cell proliferation, apoptosis and differentiation. Also catalyzes the reverse reaction allowing the synthesis of ceramides from fatty acids and sphingosine. Together with sphingomyelinase, participates in the production of sphingosine and sphingosine-1-phosphate from the degradation of sphingomyelin, a sphingolipid enriched in the plasma membrane of cells. Also participates in the hydrolysis of ceramides from the extracellular milieu allowing the production of sphingosine-1-phosphate inside and outside cells. This is the case for instance with the digestion of dietary sphingolipids in the intestinal tract. This is Neutral ceramidase (Asah2) from Mus musculus (Mouse).